The sequence spans 308 residues: uncharacterized protein (308 aa).

An S4 RNA-binding domain is found at 11–87 (KRLDSLLASL…LKLEVLFEDK (77 aa)). Asp131 is an active-site residue.

The protein belongs to the pseudouridine synthase RluA family.

It carries out the reaction a uridine in RNA = a pseudouridine in RNA. This is an uncharacterized protein from Mycoplasma genitalium (strain ATCC 33530 / DSM 19775 / NCTC 10195 / G37) (Mycoplasmoides genitalium).